A 181-amino-acid chain; its full sequence is Malignant T-cell-amplified sequence 2 (181 aa).

The region spanning 92 to 171 (LPHQQVDKGA…IGIENIHYLN (80 aa)) is the PUA domain.

It belongs to the MCTS1 family.

Its subcellular location is the cytoplasm. In Mus musculus (Mouse), this protein is Malignant T-cell-amplified sequence 2.